We begin with the raw amino-acid sequence, 208 residues long: Cytochrome c oxidase assembly protein CtaG (208 aa).

Residues 1 to 19 are Cytoplasmic-facing; that stretch reads MSPPLPQAPQQPAPRRGLG. A helical; Signal-anchor for type II membrane protein transmembrane segment spans residues 20 to 42; the sequence is HDTAVAAVCGLVVALMVGASFAA. Residues 43–208 lie on the Periplasmic side of the membrane; that stretch reads VPFYNWFCRT…SEPAPRKGNL (166 aa).

It belongs to the COX11/CtaG family.

Its subcellular location is the cell inner membrane. Exerts its effect at some terminal stage of cytochrome c oxidase synthesis, probably by being involved in the insertion of the copper B into subunit I. This chain is Cytochrome c oxidase assembly protein CtaG, found in Rhodopseudomonas palustris (strain TIE-1).